Reading from the N-terminus, the 663-residue chain is Fructose-1,6-bisphosphatase class 3 1 (663 aa).

The protein belongs to the FBPase class 3 family. The cofactor is Mn(2+).

The enzyme catalyses beta-D-fructose 1,6-bisphosphate + H2O = beta-D-fructose 6-phosphate + phosphate. Its pathway is carbohydrate biosynthesis; gluconeogenesis. In Clostridium beijerinckii (strain ATCC 51743 / NCIMB 8052) (Clostridium acetobutylicum), this protein is Fructose-1,6-bisphosphatase class 3 1.